The sequence spans 776 residues: MRTLEDSSGTVLHRLIQEQLRYGNLTETRTLLAIQQQALRGGAGAGGTGSPQASAEILAPEDTQVLQQATRQEPQGQEHQGGESHLAENTLYRLCPQPGKGEELPTYEEAKAHSQYYAAQQAGPRPHVGDRDPRGAPGGHRSQDEALRELRHGHVRSLSERLLQLSLERNGARAPSHMSSSHSFPQLARNQQGPAPRGPPAEGPEPRGPPPQYPHVVLAHETATAVTDPRYRTRGSPHFQHAEVRILQAQVPPVFLQQQQQYQYLQQPQEHPLPPHPAVLSHGPLGALSPPEVEGPASTQTSSAPSGSAHLAQMETLLRENARLQRDNERLQRELESSAEKAGRIEKLEGEIQRLSEAHESLMRASSKREALEKTMRNKMDSEMRRLQDFNRDLRERLESANRRLASKTQEAQAGSQDMVAKLLAQSYEQQQEQEKLEREMALLRGAIEDQRRRAELLEQALSNAQGRAARAEEELRKKQAYVEKVERLQQALGQLQAACEKRELLELRLRTRLEQELKALRAQQRQAGTPTGASGGSPELSALRLSEQLREKEEQILALEADMTKWEQKYLEERAMRQFAMDAAATAAAQRDTTLIRHSPQPSPSSSFNEGLLTGGHRHQEMESRLKVLHAQILEKDAVIKVLQQRSRKDPGKATQGSLRPAKSVPSVFVAAAAGTQGWQSLSSSERPADAPARLATDRAPEEEPVAAAPLPAHAKHGSRDGSTQTDGPTEGASACLGLDPDSLLGYSGGQRTASLDSVAASRVQDLSDMVEILI.

A disordered region spans residues 41–88 (GGAGAGGTGSPQASAEILAPEDTQVLQQATRQEPQGQEHQGGESHLAE). Residues 101–307 (GEELPTYEEA…STQTSSAPSG (207 aa)) are required for interaction with CDH5. Tyr-107 is subject to Phosphotyrosine. Disordered regions lie at residues 119–142 (AQQA…GHRS), 169–215 (RNGA…QYPH), and 283–309 (GPLG…SGSA). Over residues 177–192 (HMSSSHSFPQLARNQQ) the composition is skewed to polar residues. The span at 196 to 213 (PRGPPAEGPEPRGPPPQY) shows a compositional bias: pro residues. The interval 220–307 (HETATAVTDP…STQTSSAPSG (88 aa)) is required for interaction with CDH1. A compositionally biased stretch (polar residues) spans 297–306 (ASTQTSSAPS). Coiled-coil stretches lie at residues 314-509 (METL…LELR) and 543-570 (ALRL…WEQK). Glycyl lysine isopeptide (Lys-Gly) (interchain with G-Cter in ubiquitin) cross-links involve residues Lys-347 and Lys-408. Disordered regions lie at residues 591 to 620 (QRDT…GHRH) and 677 to 743 (TQGW…LDPD). The span at 678–687 (QGWQSLSSSE) shows a compositional bias: polar residues. Ser-756 and Ser-759 each carry phosphoserine. The PDZ-binding signature appears at 773 to 776 (EILI).

It belongs to the angiomotin family. In terms of assembly, part of a complex composed of AMOTL2, MAGI1 and CDH5, within the complex AMOTL2 acts as a scaffold protein for the interaction of MAGI1 with CDH5. The complex is required for coupling actin fibers to cell junctions in endothelial cells. Within the complex AMOTL2 (via its N-terminus) interacts with CDH5. Interacts (via N-terminus) with MAGI1. Interacts (via N-terminus) with ACTB; the interaction facilitates binding of cell junction complexes to actin fibers in endothelial cells. Interacts with CDH1; the interaction may facilitate binding of radial actin fibers to cell junction complexes. Interacts with SRC. Interacts with YAP1; the interaction is required for ubiquitination of AMOTL2 and localization of YAP1 to tight junctions. Interacts with WWP1; the interaction facilitates WWP1 interaction with the Crumbs complex and subsequent WWP1 translocation to the plasma membrane. WPP1 interaction with the Crumbs complex promotes WPP1 monoubiquitination of AMOTL2 which subsequently activates the Hippo signaling pathway. When ubiquitinated interacts with LATS2 (via UBA domain); the interaction promotes LATS2 phosphorylation of YAP1. Interacts (via PPXY motif) with WWTR1/TAZ (via WW domain); the interaction promotes WWTR1/TAZ localization to the cytoplasm and thereby inhibition of its transcriptional properties. Interacts with PHLDB2; interaction may facilitate PHLDB2 localization to the myotube podosome cortex that surrounds the core. In terms of processing, monoubiquitinated at Lys-347 and Lys-408 by Crumbs complex-bound WWP1. De-ubiquitinated at Lys-347 and Lys-408 by USP9X; the interaction may be promoted by cell contact inhibition. Deubiquitination of AMOTL2 negatively regulates Hippo signaling activation. Phosphorylation at Tyr-107 is necessary for efficient binding to SRC and synergistically functioning with SRC to activate the downstream MAPK pathway.

The protein resides in the recycling endosome. It is found in the cytoplasm. It localises to the cell projection. Its subcellular location is the podosome. The protein localises to the cell junction. Its function is as follows. Regulates the translocation of phosphorylated SRC to peripheral cell-matrix adhesion sites. Required for proper architecture of actin filaments. Plays a role in coupling actin fibers to cell junctions in endothelial cells and is therefore required for correct endothelial cell morphology via facilitating transcellular transmission of mechanical force resulting in endothelial cell elongation. Required for the anchoring of radial actin fibers to CDH1 junction complexes at the cell membrane which facilitates organization of radial actin fiber structure and cellular response to contractile forces. This contributes to maintenance of cell area, size, shape, epithelial sheet organization and trophectoderm cell properties that facilitate blastocyst zona hatching. Inhibits the Wnt/beta-catenin signaling pathway, probably by recruiting CTNNB1 to recycling endosomes and hence preventing its translocation to the nucleus. Participates in angiogenesis. Activates the Hippo signaling pathway in response to cell contact inhibition via interaction with and ubiquitination by Crumbs complex-bound WWP1. Ubiquitinated AMOTL2 then interacts with LATS2 which in turn phosphorylates YAP1, excluding it from the nucleus and localizing it to the cytoplasm and tight junctions, therefore ultimately repressing YAP1-driven transcription of target genes. Acts to inhibit WWTR1/TAZ transcriptional coactivator activity via sequestering WWTR1/TAZ in the cytoplasm and at tight junctions. Regulates the size and protein composition of the podosome cortex and core at myofibril neuromuscular junctions. Selectively promotes FGF-induced MAPK activation through SRC. May play a role in the polarity, proliferation and migration of endothelial cells. This Canis lupus familiaris (Dog) protein is Angiomotin-like protein 2.